Here is a 355-residue protein sequence, read N- to C-terminus: UPF0421 protein BCE33L2478 (355 aa).

4 helical membrane passes run 19–39, 74–94, 109–129, and 131–151; these read IAVF…IFAV, FTFF…FTIV, TLTA…AFLI, and LATT…ILPP.

It belongs to the UPF0421 family.

Its subcellular location is the cell membrane. The chain is UPF0421 protein BCE33L2478 from Bacillus cereus (strain ZK / E33L).